A 452-amino-acid polypeptide reads, in one-letter code: MRRALGTLGCCLALLLPLLPAARGVPHRHRRQPLGSGLGRHGAADTACKNRPLDLVFIIDSSRSVRPEEFEKVKIFLSKMIDTLDVGERTTRVAVMNYASTVKVEFPLRTYFDKASMKEAVSRIQPLSAGTMTGLAIQAAMDEVFTEEMGTRPANFNIPKVVIIVTDGRPQDQVENVAANARTAGIEIYAVGVGRADMQSLRIMASEPLDEHVFYVETYGVIEKLTSKFRETFCAANTCALGTHDCEQVCVSNDGSYLCDCYEGYTLNPDKRTCSAVDVCAPGRHECDQICVSNNGSYVCECFEGYTLNPDKKTCSAMDVCAPGRHDCAQVCRRNGGSYSCDCFEGFTLNPDKKTCSAVDVCAPGRHDCEQVCVRDDLFYTCDCYQGYVLNPDKKTCSRATTSSLVTDEEACKCEAIAALQDSVTSRLEALSTKLDEVSQKLQAYQDRQQVV.

An N-terminal signal peptide occupies residues 1-24 (MRRALGTLGCCLALLLPLLPAARG). Residues 54-229 (DLVFIIDSSR…GVIEKLTSKF (176 aa)) enclose the VWFA domain. EGF-like domains lie at 235–275 (AANT…RTCS), 276–316 (AVDV…KTCS), 317–357 (AMDV…KTCS), and 358–398 (AVDV…KTCS). Cystine bridges form between C239/C250, C246/C259, C261/C274, C280/C291, C287/C300, C302/C315, C321/C332, C328/C341, C343/C356, C362/C373, C369/C382, and C384/C397. N295 is a glycosylation site (N-linked (GlcNAc...) asparagine). Positions 419–451 (ALQDSVTSRLEALSTKLDEVSQKLQAYQDRQQV) form a coiled coil.

Can form homooligomers (monomers, dimers, trimers and tetramers) and heterooligomers with matrilin-1. In terms of tissue distribution, expression is restricted to cartilaginous tissues.

It localises to the secreted. In terms of biological role, major component of the extracellular matrix of cartilage and may play a role in the formation of extracellular filamentous networks. In Gallus gallus (Chicken), this protein is Matrilin-3 (MATN3).